The following is a 448-amino-acid chain: Tubulin beta chain (448 aa).

The GTP site is built by Gln-11, Glu-69, Ser-138, Gly-142, Thr-143, Gly-144, Asn-204, and Asn-226. Glu-69 is a binding site for Mg(2+). The segment at 425 to 448 (YQDASISEGEEEYLEEEEPLEHEE) is disordered. Positions 432 to 448 (EGEEEYLEEEEPLEHEE) are enriched in acidic residues.

It belongs to the tubulin family. As to quaternary structure, dimer of alpha and beta chains. A typical microtubule is a hollow water-filled tube with an outer diameter of 25 nm and an inner diameter of 15 nM. Alpha-beta heterodimers associate head-to-tail to form protofilaments running lengthwise along the microtubule wall with the beta-tubulin subunit facing the microtubule plus end conferring a structural polarity. Microtubules usually have 13 protofilaments but different protofilament numbers can be found in some organisms and specialized cells. The cofactor is Mg(2+).

The protein localises to the cytoplasm. It localises to the cytoskeleton. Functionally, tubulin is the major constituent of microtubules, a cylinder consisting of laterally associated linear protofilaments composed of alpha- and beta-tubulin heterodimers. Microtubules grow by the addition of GTP-tubulin dimers to the microtubule end, where a stabilizing cap forms. Below the cap, tubulin dimers are in GDP-bound state, owing to GTPase activity of alpha-tubulin. This is Tubulin beta chain from Aspergillus flavus.